The chain runs to 179 residues: MSRIGKTPVLIPEKVTVDLDGLIVTVKGPKGELKRLMPEGVSFDKKDNTVVVSPTTNKIHSRQRHGLCRALIANMVEGVTQGFSKKLEIVGVGSRAQVKGKNLVVSAGYSHPVEMIPPDGITYKVESNTNVTVSGIDKEIVGNEAAKIRSIRPPEPYKGKGIKYHDERILRKAGKSGKK.

The protein belongs to the universal ribosomal protein uL6 family. In terms of assembly, part of the 50S ribosomal subunit.

Functionally, this protein binds to the 23S rRNA, and is important in its secondary structure. It is located near the subunit interface in the base of the L7/L12 stalk, and near the tRNA binding site of the peptidyltransferase center. This is Large ribosomal subunit protein uL6 from Prochlorococcus marinus (strain MIT 9312).